The chain runs to 335 residues: Acetyl-coenzyme A carboxylase carboxyl transferase subunit alpha (335 aa).

In terms of domain architecture, CoA carboxyltransferase C-terminal spans 48–308 (VLESKVDALR…KSLLVEELRM (261 aa)).

It belongs to the AccA family. Acetyl-CoA carboxylase is a heterohexamer composed of biotin carboxyl carrier protein (AccB), biotin carboxylase (AccC) and two subunits each of ACCase subunit alpha (AccA) and ACCase subunit beta (AccD).

The protein localises to the cytoplasm. The catalysed reaction is N(6)-carboxybiotinyl-L-lysyl-[protein] + acetyl-CoA = N(6)-biotinyl-L-lysyl-[protein] + malonyl-CoA. Its pathway is lipid metabolism; malonyl-CoA biosynthesis; malonyl-CoA from acetyl-CoA: step 1/1. Its function is as follows. Component of the acetyl coenzyme A carboxylase (ACC) complex. First, biotin carboxylase catalyzes the carboxylation of biotin on its carrier protein (BCCP) and then the CO(2) group is transferred by the carboxyltransferase to acetyl-CoA to form malonyl-CoA. The chain is Acetyl-coenzyme A carboxylase carboxyl transferase subunit alpha from Chlorobium phaeobacteroides (strain BS1).